An 874-amino-acid chain; its full sequence is Alanine--tRNA ligase (874 aa).

Zn(2+)-binding residues include histidine 564, histidine 568, cysteine 665, and histidine 669.

This sequence belongs to the class-II aminoacyl-tRNA synthetase family. Zn(2+) serves as cofactor.

It is found in the cytoplasm. It catalyses the reaction tRNA(Ala) + L-alanine + ATP = L-alanyl-tRNA(Ala) + AMP + diphosphate. Functionally, catalyzes the attachment of alanine to tRNA(Ala) in a two-step reaction: alanine is first activated by ATP to form Ala-AMP and then transferred to the acceptor end of tRNA(Ala). Also edits incorrectly charged Ser-tRNA(Ala) and Gly-tRNA(Ala) via its editing domain. This chain is Alanine--tRNA ligase, found in Burkholderia multivorans (strain ATCC 17616 / 249).